Here is a 330-residue protein sequence, read N- to C-terminus: Deoxyhypusine hydroxylase (330 aa).

HEAT-like PBS-type repeat units follow at residues Leu-57 to Asn-83, Val-90 to Asp-116, and Glu-199 to Gly-225. 4 residues coordinate Fe cation: His-59, Glu-60, His-92, and Glu-93. The Fe cation site is built by His-232, Glu-233, His-265, and Glu-266. Residues Val-263 to Arg-289 form an HEAT-like PBS-type 4 repeat.

This sequence belongs to the deoxyhypusine hydroxylase family. Fe(2+) serves as cofactor.

Its subcellular location is the cytoplasm. It localises to the nucleus. The enzyme catalyses [eIF5A protein]-deoxyhypusine + AH2 + O2 = [eIF5A protein]-hypusine + A + H2O. It participates in protein modification; eIF5A hypusination. Its function is as follows. Catalyzes the hydroxylation of the N(6)-(4-aminobutyl)-L-lysine intermediate to form hypusine, an essential post-translational modification only found in mature eIF-5A factor. In Lentinula edodes (Shiitake mushroom), this protein is Deoxyhypusine hydroxylase.